Consider the following 295-residue polypeptide: MVSSWWEIQVVGDAALEEGISWRLQSFGCQGTASQKQNHDCHMTGYLPQKQVNHLDLAALSLWLAQDAIALGFLPPTTRWKLINEEDWATSWQQYWHPQEVGDRLLIYPAWLDLPEHCERLLLRLDPGVAFGTGTHPTTQLCLEALEMHLDQTFGPVEQVTVADIGCGTGILSIAALRLGAKQAFAVDLDPLAVESADRSRDLNEIPPEQMIVQQGSVEQVPHPVQGIVCNILAETIIDLIPTLATISQPHTWAAFSGILVTQAKSVVDALEQQGWQVGSLWQRQDWCCINAHRL.

Thr139, Gly166, Asp188, and Asn231 together coordinate S-adenosyl-L-methionine.

The protein belongs to the methyltransferase superfamily. PrmA family.

The protein localises to the cytoplasm. It carries out the reaction L-lysyl-[protein] + 3 S-adenosyl-L-methionine = N(6),N(6),N(6)-trimethyl-L-lysyl-[protein] + 3 S-adenosyl-L-homocysteine + 3 H(+). Methylates ribosomal protein L11. The sequence is that of Ribosomal protein L11 methyltransferase from Cyanothece sp. (strain PCC 7425 / ATCC 29141).